The following is a 286-amino-acid chain: Protein NipSnap homolog 2 (286 aa).

The N-terminal 23 residues, 1–23 (MAARVLRARGAAWAGGLLQRAAP), are a transit peptide targeting the mitochondrion.

This sequence belongs to the NipSnap family. Interacts with CALCOCO2/NDP52, NBR1, SQSTM1/p62, TAX1BP1 and WDFY3/ALFY. Interacts with ATG8 family proteins (MAP1LC3A, MAP1LC3B, MAP1LC3C, GABARAP, GABARAPL1 and GABARAPL2). Interacts with VDAC1. Widely expressed. Most abundant in heart and skeletal muscle.

It is found in the mitochondrion matrix. Functionally, protein involved in mitophagy by facilitating recruitment of the autophagy machinery required for clearance of damaged mitochondria. Accumulates on the mitochondria surface in response to mitochondrial depolarization and acts as a 'eat me' signal by recruiting proteins involved in selective autophagy, such as autophagy receptors (CALCOCO2/NDP52, NBR1, SQSTM1/p62, TAX1BP1 and WDFY3/ALFY) and ATG8 family proteins (MAP1LC3A, MAP1LC3B, MAP1LC3C, GABARAP, GABARAPL1 and GABARAPL2). This is Protein NipSnap homolog 2 from Homo sapiens (Human).